The primary structure comprises 453 residues: Bifunctional protein GlmU (453 aa).

The interval 1 to 225 (MNIVILAAGT…EWETLGVNSK (225 aa)) is pyrophosphorylase. Residues 6–9 (LAAG), K20, Q71, 76–77 (GT), 98–100 (YGD), G135, E150, N165, and N223 each bind UDP-N-acetyl-alpha-D-glucosamine. D100 is a Mg(2+) binding site. N223 provides a ligand contact to Mg(2+). The linker stretch occupies residues 226 to 246 (AQLAELERIHQRNVADALLVD). The interval 247–453 (GVTLADPARV…GYVRPVKKKS (207 aa)) is N-acetyltransferase. Positions 329 and 347 each coordinate UDP-N-acetyl-alpha-D-glucosamine. H359 functions as the Proton acceptor in the catalytic mechanism. Y362 and N373 together coordinate UDP-N-acetyl-alpha-D-glucosamine. Acetyl-CoA is bound by residues A376, 382 to 383 (NY), S401, and A419.

In the N-terminal section; belongs to the N-acetylglucosamine-1-phosphate uridyltransferase family. The protein in the C-terminal section; belongs to the transferase hexapeptide repeat family. In terms of assembly, homotrimer. It depends on Mg(2+) as a cofactor.

The protein localises to the cytoplasm. The enzyme catalyses alpha-D-glucosamine 1-phosphate + acetyl-CoA = N-acetyl-alpha-D-glucosamine 1-phosphate + CoA + H(+). The catalysed reaction is N-acetyl-alpha-D-glucosamine 1-phosphate + UTP + H(+) = UDP-N-acetyl-alpha-D-glucosamine + diphosphate. The protein operates within nucleotide-sugar biosynthesis; UDP-N-acetyl-alpha-D-glucosamine biosynthesis; N-acetyl-alpha-D-glucosamine 1-phosphate from alpha-D-glucosamine 6-phosphate (route II): step 2/2. Its pathway is nucleotide-sugar biosynthesis; UDP-N-acetyl-alpha-D-glucosamine biosynthesis; UDP-N-acetyl-alpha-D-glucosamine from N-acetyl-alpha-D-glucosamine 1-phosphate: step 1/1. It functions in the pathway bacterial outer membrane biogenesis; LPS lipid A biosynthesis. Its function is as follows. Catalyzes the last two sequential reactions in the de novo biosynthetic pathway for UDP-N-acetylglucosamine (UDP-GlcNAc). The C-terminal domain catalyzes the transfer of acetyl group from acetyl coenzyme A to glucosamine-1-phosphate (GlcN-1-P) to produce N-acetylglucosamine-1-phosphate (GlcNAc-1-P), which is converted into UDP-GlcNAc by the transfer of uridine 5-monophosphate (from uridine 5-triphosphate), a reaction catalyzed by the N-terminal domain. The polypeptide is Bifunctional protein GlmU (Burkholderia orbicola (strain MC0-3)).